A 335-amino-acid polypeptide reads, in one-letter code: 3-dehydroquinate synthase (335 aa).

NAD(+) contacts are provided by residues 56 to 61 (DGEKYK), 90 to 94 (GVITD), 114 to 115 (TT), Lys-127, Lys-135, and 153 to 156 (FLKT). 3 residues coordinate Zn(2+): Glu-168, His-227, and His-243.

This sequence belongs to the sugar phosphate cyclases superfamily. Dehydroquinate synthase family. NAD(+) is required as a cofactor. Co(2+) serves as cofactor. Requires Zn(2+) as cofactor.

It localises to the cytoplasm. It carries out the reaction 7-phospho-2-dehydro-3-deoxy-D-arabino-heptonate = 3-dehydroquinate + phosphate. It functions in the pathway metabolic intermediate biosynthesis; chorismate biosynthesis; chorismate from D-erythrose 4-phosphate and phosphoenolpyruvate: step 2/7. Catalyzes the conversion of 3-deoxy-D-arabino-heptulosonate 7-phosphate (DAHP) to dehydroquinate (DHQ). This Pyrococcus furiosus (strain ATCC 43587 / DSM 3638 / JCM 8422 / Vc1) protein is 3-dehydroquinate synthase.